Here is a 492-residue protein sequence, read N- to C-terminus: N-succinylglutamate 5-semialdehyde dehydrogenase (492 aa).

NAD(+) is bound at residue 220-225 (GSASTG). Residues Glu-243 and Cys-277 contribute to the active site.

The protein belongs to the aldehyde dehydrogenase family. AstD subfamily.

The enzyme catalyses N-succinyl-L-glutamate 5-semialdehyde + NAD(+) + H2O = N-succinyl-L-glutamate + NADH + 2 H(+). Its pathway is amino-acid degradation; L-arginine degradation via AST pathway; L-glutamate and succinate from L-arginine: step 4/5. In terms of biological role, catalyzes the NAD-dependent reduction of succinylglutamate semialdehyde into succinylglutamate. The chain is N-succinylglutamate 5-semialdehyde dehydrogenase from Salmonella heidelberg (strain SL476).